The chain runs to 318 residues: MDVRADQHQYNPYRVFSRDQWAKLRDDAPMTLDAQEISALRSMHDRLDLQEVEEIYLPLSRLLSIYVASMQQLYVAQRRFLGIVDRKMPYIIGVAGSVAVGKSTTARVLQALLARWSPRPKVDLITTDGFLYPNAVLERQGIMQKKGFPESYDLPKLLAFLSDIKAGRRRVRAPVYSHLTYDIVPNSHITVDRPDILIVEGVNVLQTGKLPRDGKAVPVVSDFFDFSVYIDAEEPVLREWYVSRFLALRDTAFHDPRSYFHRYAPLSDEEATATALAIWERTNLANLEDNILPTRPRATLILKKGADHVVETVALRRL.

ATP is bound at residue 96-103 (GSVAVGKS).

This sequence belongs to the prokaryotic pantothenate kinase family.

The protein resides in the cytoplasm. The enzyme catalyses (R)-pantothenate + ATP = (R)-4'-phosphopantothenate + ADP + H(+). It functions in the pathway cofactor biosynthesis; coenzyme A biosynthesis; CoA from (R)-pantothenate: step 1/5. In Rhodopseudomonas palustris (strain BisA53), this protein is Pantothenate kinase.